Consider the following 368-residue polypeptide: High affinity iron permease 1 (368 aa).

7 helical membrane-spanning segments follow: residues 8-28, 50-70, 86-106, 142-162, 173-193, 204-224, and 287-307; these read VPIF…ISVL, VWIG…AFIA, IWEG…GLAM, AFFV…VVFI, SIPI…FLIY, FFVF…AKGV, and SIIS…FSYF. Residues 346-368 form a disordered region; the sequence is DKESDEEANNHPKEKIESDAIKA. The span at 353 to 368 shows a compositional bias: basic and acidic residues; sequence ANNHPKEKIESDAIKA.

It belongs to the oxidase-dependent Fe transporter (OFeT) (TC 9.A.10.1) family.

The protein resides in the cell membrane. In terms of biological role, high affinity iron permease required for iron uptake in iron-depleted environments. Required for full virulence in mice. This is High affinity iron permease 1 from Rhizopus delemar (strain RA 99-880 / ATCC MYA-4621 / FGSC 9543 / NRRL 43880) (Mucormycosis agent).